A 216-amino-acid polypeptide reads, in one-letter code: LexA repressor (216 aa).

The H-T-H motif DNA-binding region spans 28–48 (RAEIAAEFGFSSPNAAEEHLR). Residues serine 134 and lysine 171 each act as for autocatalytic cleavage activity in the active site.

Belongs to the peptidase S24 family. In terms of assembly, homodimer.

The catalysed reaction is Hydrolysis of Ala-|-Gly bond in repressor LexA.. Its function is as follows. Represses a number of genes involved in the response to DNA damage (SOS response), including recA and lexA. In the presence of single-stranded DNA, RecA interacts with LexA causing an autocatalytic cleavage which disrupts the DNA-binding part of LexA, leading to derepression of the SOS regulon and eventually DNA repair. The protein is LexA repressor of Ralstonia nicotianae (strain ATCC BAA-1114 / GMI1000) (Ralstonia solanacearum).